Reading from the N-terminus, the 118-residue chain is D-dopachrome decarboxylase (118 aa).

P2 is modified (N-acetylproline). K33 is subject to N6-acetyllysine.

The protein belongs to the MIF family. As to quaternary structure, homotrimer.

The protein resides in the cytoplasm. The catalysed reaction is D-dopachrome + H(+) = 5,6-dihydroxyindole + CO2. Functionally, tautomerization of D-dopachrome with decarboxylation to give 5,6-dihydroxyindole (DHI). The protein is D-dopachrome decarboxylase (DDT) of Bos taurus (Bovine).